Here is a 434-residue protein sequence, read N- to C-terminus: Cytochrome c biogenesis protein CcsB (434 aa).

The next 3 helical transmembrane spans lie at Leu-15–Ile-35, Ser-73–Arg-93, and Val-163–Ala-183.

The protein belongs to the Ccs1/CcsB family. In terms of assembly, may interact with CcsA.

The protein resides in the cellular thylakoid membrane. Functionally, required during biogenesis of c-type cytochromes (cytochrome c6 and cytochrome f) at the step of heme attachment. This Synechococcus sp. (strain RCC307) protein is Cytochrome c biogenesis protein CcsB.